Reading from the N-terminus, the 274-residue chain is Thiamine kinase (274 aa).

This sequence belongs to the thiamine kinase family.

It catalyses the reaction thiamine + ATP = thiamine phosphate + ADP + H(+). It participates in cofactor biosynthesis; thiamine diphosphate biosynthesis; thiamine phosphate from thiamine: step 1/1. In terms of biological role, catalyzes the ATP-dependent phosphorylation of thiamine to thiamine phosphate. Is involved in thiamine salvage. This is Thiamine kinase from Escherichia coli (strain SMS-3-5 / SECEC).